The sequence spans 136 residues: uncharacterized protein (136 aa).

Residues 1–51 (MAANATSGRPPSIALRQPEATGWRRGIPAKVATKGTQAEREGDVRSGGRAR) form a disordered region. Residues 37–46 (QAEREGDVRS) are compositionally biased toward basic and acidic residues.

This is an uncharacterized protein from Homo sapiens (Human).